Here is a 257-residue protein sequence, read N- to C-terminus: MQVIRLAALSDNYIFLLHDSQKNIAAVVDPAEAEPVLKQLAQLNAELVAIFNTHHHNDHVGGNQQLIQNFPQLKVYGGAEDKGRIPGQQVFLQPGDRVQFTDRVAEVIFVPGHTRAHIAYYFPPQTADTPGELFCGDTLFAGGCGRLFEGTPAQMVESLTKLRSLPENTRVWCAHEYTLKNLQFALSVDSENTELQKRFDEVKTKRSQGIATVPSLLGVEKLTNPFLRWEQPSLQSAVNSNDPVQTFARIRGLKDKF.

Zn(2+) is bound by residues H54, H56, D58, H59, H113, D137, and H175.

This sequence belongs to the metallo-beta-lactamase superfamily. Glyoxalase II family. As to quaternary structure, monomer. Requires Zn(2+) as cofactor.

The catalysed reaction is an S-(2-hydroxyacyl)glutathione + H2O = a 2-hydroxy carboxylate + glutathione + H(+). Its pathway is secondary metabolite metabolism; methylglyoxal degradation; (R)-lactate from methylglyoxal: step 2/2. Functionally, thiolesterase that catalyzes the hydrolysis of S-D-lactoyl-glutathione to form glutathione and D-lactic acid. The sequence is that of Hydroxyacylglutathione hydrolase from Trichormus variabilis (strain ATCC 29413 / PCC 7937) (Anabaena variabilis).